The primary structure comprises 22 residues: NDMA-dependent alcohol dehydrogenase (22 aa).

The protein belongs to the zinc-containing alcohol dehydrogenase family. As to quaternary structure, homotetramer. It depends on NADH as a cofactor.

The protein localises to the cytoplasm. The catalysed reaction is N,N-dimethyl-4-nitrosoaniline + a primary alcohol = 4-(hydroxylamino)-N,N-dimethylaniline + an aldehyde. It catalyses the reaction ethanol + A = acetaldehyde + AH2. Functionally, this is a novel enzyme, catalytically different from common alcohol dehydrogenases. It is effective in oxidizing ethanol, other primary alcohols and benzylalcohol only in the presence of p-nitroso-N,N-dimethylaniline (NDMA) as an electron acceptor. NADH acts as a cofactor here instead of as a coenzyme. The protein is NDMA-dependent alcohol dehydrogenase of Rhodococcus erythropolis (Arthrobacter picolinophilus).